A 165-amino-acid polypeptide reads, in one-letter code: Transcriptional regulator MraZ (165 aa).

SpoVT-AbrB domains follow at residues 5 to 51 (TYEG…GEEL) and 80 to 123 (SAEL…NPER).

Belongs to the MraZ family. Forms oligomers.

The protein resides in the cytoplasm. It is found in the nucleoid. This Hyphomonas neptunium (strain ATCC 15444) protein is Transcriptional regulator MraZ.